The chain runs to 158 residues: 6,7-dimethyl-8-ribityllumazine synthase (158 aa).

Residues F24, 58–60 (AFE), and 82–84 (AVI) each bind 5-amino-6-(D-ribitylamino)uracil. Position 87-88 (87-88 (GT)) interacts with (2S)-2-hydroxy-3-oxobutyl phosphate. H90 (proton donor) is an active-site residue. 5-amino-6-(D-ribitylamino)uracil is bound at residue F115. R129 is a binding site for (2S)-2-hydroxy-3-oxobutyl phosphate.

Belongs to the DMRL synthase family. As to quaternary structure, forms an icosahedral capsid composed of 60 subunits, arranged as a dodecamer of pentamers.

It catalyses the reaction (2S)-2-hydroxy-3-oxobutyl phosphate + 5-amino-6-(D-ribitylamino)uracil = 6,7-dimethyl-8-(1-D-ribityl)lumazine + phosphate + 2 H2O + H(+). It participates in cofactor biosynthesis; riboflavin biosynthesis; riboflavin from 2-hydroxy-3-oxobutyl phosphate and 5-amino-6-(D-ribitylamino)uracil: step 1/2. In terms of biological role, catalyzes the formation of 6,7-dimethyl-8-ribityllumazine by condensation of 5-amino-6-(D-ribitylamino)uracil with 3,4-dihydroxy-2-butanone 4-phosphate. This is the penultimate step in the biosynthesis of riboflavin. The chain is 6,7-dimethyl-8-ribityllumazine synthase from Pseudomonas paraeruginosa (strain DSM 24068 / PA7) (Pseudomonas aeruginosa (strain PA7)).